An 877-amino-acid chain; its full sequence is Bifunctional uridylyltransferase/uridylyl-removing enzyme (877 aa).

The tract at residues 1-335 (MDGPNSDRAH…HRDDAFSPTP (335 aa)) is uridylyltransferase. Positions 336-695 (VNDHFQAVND…LRPESLRGSV (360 aa)) are uridylyl-removing. The region spanning 454 to 576 (VDEHTLFVVR…VRNQNTLNHL (123 aa)) is the HD domain. ACT domains lie at 696-778 (EVFI…AVSR) and 805-877 (ILEL…VGDQ).

The protein belongs to the GlnD family. Mg(2+) is required as a cofactor.

The enzyme catalyses [protein-PII]-L-tyrosine + UTP = [protein-PII]-uridylyl-L-tyrosine + diphosphate. The catalysed reaction is [protein-PII]-uridylyl-L-tyrosine + H2O = [protein-PII]-L-tyrosine + UMP + H(+). Uridylyltransferase (UTase) activity is inhibited by glutamine, while glutamine activates uridylyl-removing (UR) activity. Modifies, by uridylylation and deuridylylation, the PII regulatory proteins (GlnB and homologs), in response to the nitrogen status of the cell that GlnD senses through the glutamine level. Under low glutamine levels, catalyzes the conversion of the PII proteins and UTP to PII-UMP and PPi, while under higher glutamine levels, GlnD hydrolyzes PII-UMP to PII and UMP (deuridylylation). Thus, controls uridylylation state and activity of the PII proteins, and plays an important role in the regulation of nitrogen fixation and metabolism. The polypeptide is Bifunctional uridylyltransferase/uridylyl-removing enzyme (Methylococcus capsulatus (strain ATCC 33009 / NCIMB 11132 / Bath)).